The following is a 545-amino-acid chain: ATP synthase subunit alpha (545 aa).

173 to 180 (GDRQTGKT) serves as a coordination point for ATP.

It belongs to the ATPase alpha/beta chains family. As to quaternary structure, F-type ATPases have 2 components, CF(1) - the catalytic core - and CF(0) - the membrane proton channel. CF(1) has five subunits: alpha(3), beta(3), gamma(1), delta(1), epsilon(1). CF(0) has three main subunits: a(1), b(2) and c(9-12). The alpha and beta chains form an alternating ring which encloses part of the gamma chain. CF(1) is attached to CF(0) by a central stalk formed by the gamma and epsilon chains, while a peripheral stalk is formed by the delta and b chains.

The protein localises to the cell membrane. It carries out the reaction ATP + H2O + 4 H(+)(in) = ADP + phosphate + 5 H(+)(out). Produces ATP from ADP in the presence of a proton gradient across the membrane. The alpha chain is a regulatory subunit. This chain is ATP synthase subunit alpha, found in Paenarthrobacter aurescens (strain TC1).